Reading from the N-terminus, the 883-residue chain is Lysine-specific demethylase JMJ29 (883 aa).

Disordered regions lie at residues 30–62 (KPFMSKGSSPSSSSDSRKRKLSRAEDSDDSAVK) and 161–204 (RTHS…SRKQ). Residues 34–43 (SKGSSPSSSS) are compositionally biased toward low complexity. Composition is skewed to polar residues over residues 161–172 (RTHSLSANSPEN) and 184–204 (SPASNVSDSIQKNDCTSSRKQ). 12 residues coordinate Zn(2+): cysteine 209, cysteine 212, cysteine 223, cysteine 226, cysteine 232, cysteine 235, cysteine 252, cysteine 255, cysteine 338, cysteine 341, cysteine 363, and histidine 381. The RING-type; degenerate zinc finger occupies 209–256 (CHQCLKGERITLLICSECEKTMFCLQCIRKWYPNLSEDDVVEKCPLCR). The B box-type; atypical zinc finger occupies 333–392 (DERVYCDHCATSIVDLHRSCPKCSYELCLKCCQEIREGSLSERPEMKFHYVDRGHRYMHG). The JmjC domain maps to 632–863 (PRTGILNIAT…ECLRLTEEFR (232 aa)). 2 residues coordinate Fe cation: histidine 676 and aspartate 678. Residues 713-743 (NKVDKQSTEDCNEKEEEEEEELNMPEISSNE) are disordered. The span at 722–735 (DCNEKEEEEEEELN) shows a compositional bias: acidic residues. The short motif at 755-762 (FRREDVPK) is the Nuclear localization signal element. Histidine 831 is a Fe cation binding site.

This sequence belongs to the JARID1 histone demethylase family. The cofactor is Fe(2+). As to expression, expressed in inflorescences, roots, siliques, leaves and stems.

The protein resides in the nucleus. Its function is as follows. May function as histone H3 lysine demethylase and be involved in regulation of gene expression. The protein is Lysine-specific demethylase JMJ29 of Arabidopsis thaliana (Mouse-ear cress).